Here is an 854-residue protein sequence, read N- to C-terminus: Lysine-specific demethylase 3 (854 aa).

The disordered stretch occupies residues 64-88 (QRVQQEEESLGQVPPLTEEEQQRHD). Residues 601-806 (LRTGNLNIAS…HCYHLTHEFR (206 aa)) enclose the JmjC domain. Fe cation-binding residues include H643, D645, and H774.

Belongs to the JHDM2-like histone demethylase family. The cofactor is Fe(2+). In terms of tissue distribution, expressed in neurons close to the dorsal lateral neurons involved in circadian rhythm.

It is found in the nucleus. The protein resides in the cytoplasm. The enzyme catalyses N(6),N(6)-dimethyl-L-lysyl(9)-[histone H3] + 2 2-oxoglutarate + 2 O2 = L-lysyl(9)-[histone H3] + 2 formaldehyde + 2 succinate + 2 CO2. Histone demethylase that specifically demethylates 'Lys-10' of histone H3 (H3K9), thereby playing a central role in histone code. Demethylation of Lys residue generates formaldehyde and succinate. Probably involved in regulation of chromatin structure, promoting expansion of euchromatin. Negatively regulates rhino-dependent piRNA production capacity of several genomic regions; may help define the frontiers of piRNA clusters by regulating histone methylation levels. May be involved in regulation of behavior and circadian rhythms. This chain is Lysine-specific demethylase 3, found in Drosophila melanogaster (Fruit fly).